A 485-amino-acid chain; its full sequence is DNA polymerase subunit gamma-2 (485 aa).

Residues 28 to 67 (RQPEQLSKGTGSFVGPVRSQAELPRNEPREAPESGGEGSE) form a disordered region.

In terms of assembly, heterotrimer composed of a catalytic subunit and a homodimer of accessory subunits (POLG:POLG2).

Its subcellular location is the mitochondrion. It localises to the mitochondrion matrix. It is found in the mitochondrion nucleoid. In terms of biological role, accessory subunit of DNA polymerase gamma solely responsible for replication of mitochondrial DNA (mtDNA). Acts as an allosteric regulator of the holoenzyme activities. Enhances the polymerase activity and the processivity of POLG by increasing its interactions with the DNA template. Suppresses POLG exonucleolytic proofreading especially toward homopolymeric templates bearing mismatched termini. Binds to single-stranded DNA. The protein is DNA polymerase subunit gamma-2 (POLG2) of Bos taurus (Bovine).